We begin with the raw amino-acid sequence, 325 residues long: uncharacterized protein (325 aa).

The tract at residues 1–75 (MSQPPEHPGN…PPPGYPTHLQ (75 aa)) is disordered. Composition is skewed to pro residues over residues 24–39 (YPPPGYGAPPPPPGYG) and 50–70 (YNAPPPPPGYGPPPGPPPPGY). The next 4 helical transmembrane spans lie at 96–116 (AVTLVVPVLAYAVALAAVIGA), 153–173 (IVMFLGYIALFALVLYMHAGI), 205–225 (LLIVALTFIGGLLCVIPGLIF), and 273–293 (LVGELLCFVGMLIGIPVAALI).

It is found in the cell membrane. This is an uncharacterized protein from Mycobacterium tuberculosis (strain CDC 1551 / Oshkosh).